We begin with the raw amino-acid sequence, 113 residues long: UPF0482 protein YnfB (113 aa).

A signal peptide spans 1–28; that stretch reads MKITLSKRIGLLAFLLPCALALSTTVHA.

This sequence belongs to the UPF0482 family.

The protein is UPF0482 protein YnfB of Shigella dysenteriae serotype 1 (strain Sd197).